Reading from the N-terminus, the 121-residue chain is Flagellar protein FliT (121 aa).

Positions 1–50 are required for homodimerization; sequence MNHAPHLYFAWQQLVDKSQLMLRLATEEQWDELIASEMAYVNAVQEIAHL. The segment at 60–98 is fliD binding; sequence MQEQLRPMLRLILDNESKVKQLLQIRMDELAKLVGQSSV.

Belongs to the FliT family. In terms of assembly, homodimer. Interacts with FliD and FlhC.

The protein localises to the cytoplasm. It localises to the cytosol. Its function is as follows. Dual-function protein that regulates the transcription of class 2 flagellar operons and that also acts as an export chaperone for the filament-capping protein FliD. As a transcriptional regulator, acts as an anti-FlhDC factor; it directly binds FlhC, thus inhibiting the binding of the FlhC/FlhD complex to class 2 promoters, resulting in decreased expression of class 2 flagellar operons. As a chaperone, effects FliD transition to the membrane by preventing its premature polymerization, and by directing it to the export apparatus. In Shigella sonnei (strain Ss046), this protein is Flagellar protein FliT.